We begin with the raw amino-acid sequence, 598 residues long: Elongation factor 4 (598 aa).

Residues Lys2–Glu184 form the tr-type G domain. Residues Asp14–Thr19 and Asn131–Asp134 each bind GTP.

This sequence belongs to the TRAFAC class translation factor GTPase superfamily. Classic translation factor GTPase family. LepA subfamily.

It is found in the cell inner membrane. The enzyme catalyses GTP + H2O = GDP + phosphate + H(+). Its function is as follows. Required for accurate and efficient protein synthesis under certain stress conditions. May act as a fidelity factor of the translation reaction, by catalyzing a one-codon backward translocation of tRNAs on improperly translocated ribosomes. Back-translocation proceeds from a post-translocation (POST) complex to a pre-translocation (PRE) complex, thus giving elongation factor G a second chance to translocate the tRNAs correctly. Binds to ribosomes in a GTP-dependent manner. The sequence is that of Elongation factor 4 from Proteus mirabilis (strain HI4320).